Consider the following 804-residue polypeptide: MAATLLSQCYRIYNSDACKCVSSENHQTTGKRNGNRNLEFDSGISKPARLVLRDRYKVTKQVNDPALTRALRGFADSRLMEDALQLFDEMNKADAFLWNVMIKGFTSCGLYIEAVQFYSRMVFAGVKADTFTYPFVIKSVAGISSLEEGKKIHAMVIKLGFVSDVYVCNSLISLYMKLGCAWDAEKVFEEMPERDIVSWNSMISGYLALGDGFSSLMLFKEMLKCGFKPDRFSTMSALGACSHVYSPKMGKEIHCHAVRSRIETGDVMVMTSILDMYSKYGEVSYAERIFNGMIQRNIVAWNVMIGCYARNGRVTDAFLCFQKMSEQNGLQPDVITSINLLPASAILEGRTIHGYAMRRGFLPHMVLETALIDMYGECGQLKSAEVIFDRMAEKNVISWNSIIAAYVQNGKNYSALELFQELWDSSLVPDSTTIASILPAYAESLSLSEGREIHAYIVKSRYWSNTIILNSLVHMYAMCGDLEDARKCFNHILLKDVVSWNSIIMAYAVHGFGRISVWLFSEMIASRVNPNKSTFASLLAACSISGMVDEGWEYFESMKREYGIDPGIEHYGCMLDLIGRTGNFSAAKRFLEEMPFVPTARIWGSLLNASRNHKDITIAEFAAEQIFKMEHDNTGCYVLLLNMYAEAGRWEDVNRIKLLMESKGISRTSSRSTVEAKGKSHVFTNGDRSHVATNKIYEVLDVVSRMVGEEDIYVHCVSRLRPETLVKSRSNSPRRHSVRLATCFGLISTETGRRVTVRNNTRICRKCHEFLEKASRLTRREIVVGDSKIFHHFSNGRCSCGNYW.

A chloroplast-targeting transit peptide spans 1–19; the sequence is MAATLLSQCYRIYNSDACK. 16 PPR repeats span residues 63-93, 94-128, 129-163, 164-194, 195-229, 230-264, 266-296, 297-332, 333-363, 364-394, 395-429, 430-464, 465-495, 496-530, 531-561, and 567-597; these read NDPA…MNKA, DAFL…GVKA, DTFT…GFVS, DVYV…MPER, DIVS…GFKP, DRFS…RIET, DVMV…MIQR, NIVA…GLQP, DVIT…GFLP, HMVL…MAEK, NVIS…SLVP, DSTT…RYWS, NTII…ILLK, DVVS…RVNP, NKST…MKRE, and GIEH…MPFV. The segment at 602 to 677 is type E motif; it reads IWGSLLNASR…TSSRSTVEAK (76 aa). The segment at 678-708 is type E(+) motif; that stretch reads GKSHVFTNGDRSHVATNKIYEVLDVVSRMVG. The segment at 710–804 is type DYW motif; that stretch reads EDIYVHCVSR…NGRCSCGNYW (95 aa).

This sequence belongs to the PPR family. PCMP-H subfamily.

The protein localises to the plastid. The protein resides in the chloroplast. This chain is Pentatricopeptide repeat-containing protein At4g35130, chloroplastic (PCMP-H27), found in Arabidopsis thaliana (Mouse-ear cress).